The primary structure comprises 667 residues: Capsid polyprotein (667 aa).

The prohead protease activity stretch occupies residues 8–154 (STLEVKALDD…AEATITSVKS (147 aa)).

The prohead protease may be autocatalytically cleaved giving rise to the mature capsid protein.

The protein localises to the virion. In terms of biological role, the C-terminus contains the capsid protein. The N-terminal region may act as a prohead protease. This Pseudomonas aeruginosa protein is Capsid polyprotein.